Here is a 945-residue protein sequence, read N- to C-terminus: Bifunctional glutamine synthetase adenylyltransferase/adenylyl-removing enzyme (945 aa).

The segment at 1–440 (MMPLSPQLQQ…VFNELIGDDE (440 aa)) is adenylyl removase. The segment at 449–945 (AEYWRELWQD…SASWQKWLMA (497 aa)) is adenylyl transferase.

It belongs to the GlnE family. The cofactor is Mg(2+).

It carries out the reaction [glutamine synthetase]-O(4)-(5'-adenylyl)-L-tyrosine + phosphate = [glutamine synthetase]-L-tyrosine + ADP. The enzyme catalyses [glutamine synthetase]-L-tyrosine + ATP = [glutamine synthetase]-O(4)-(5'-adenylyl)-L-tyrosine + diphosphate. Its function is as follows. Involved in the regulation of glutamine synthetase GlnA, a key enzyme in the process to assimilate ammonia. When cellular nitrogen levels are high, the C-terminal adenylyl transferase (AT) inactivates GlnA by covalent transfer of an adenylyl group from ATP to specific tyrosine residue of GlnA, thus reducing its activity. Conversely, when nitrogen levels are low, the N-terminal adenylyl removase (AR) activates GlnA by removing the adenylyl group by phosphorolysis, increasing its activity. The regulatory region of GlnE binds the signal transduction protein PII (GlnB) which indicates the nitrogen status of the cell. The sequence is that of Bifunctional glutamine synthetase adenylyltransferase/adenylyl-removing enzyme from Klebsiella pneumoniae subsp. pneumoniae (strain ATCC 700721 / MGH 78578).